A 257-amino-acid polypeptide reads, in one-letter code: Phosphonates import ATP-binding protein PhnC (257 aa).

In terms of domain architecture, ABC transporter spans 2–246; sequence IEFRNVSKVY…KFAEIYGDVA (245 aa). 35 to 42 lines the ATP pocket; the sequence is GLSGAGKS.

It belongs to the ABC transporter superfamily. Phosphonates importer (TC 3.A.1.9.1) family. The complex is composed of two ATP-binding proteins (PhnC), two transmembrane proteins (PhnE) and a solute-binding protein (PhnD).

The protein resides in the cell membrane. The catalysed reaction is phosphonate(out) + ATP + H2O = phosphonate(in) + ADP + phosphate + H(+). In terms of biological role, part of the ABC transporter complex PhnCDE involved in phosphonates import. Responsible for energy coupling to the transport system. The sequence is that of Phosphonates import ATP-binding protein PhnC from Bacillus cereus (strain ZK / E33L).